Reading from the N-terminus, the 334-residue chain is Transcription factor TGA2.1 (334 aa).

Positions 1–13 are enriched in polar residues; it reads MADASSRTDTSIV. The disordered stretch occupies residues 1-49; sequence MADASSRTDTSIVVDNDDKNHQLENGHSGAVMASNSSDRSDRSDKLMDQ. Residues 38 to 49 show a composition bias toward basic and acidic residues; that stretch reads DRSDRSDKLMDQ. The region spanning 48–92 is the bZIP domain; sequence DQKTIRRLAQNREAARKSRLRKKAYVQQLESSKLKLAQLEQELQK. The segment at 50–70 is basic motif; that stretch reads KTIRRLAQNREAARKSRLRKK. The interval 76-90 is leucine-zipper; sequence LESSKLKLAQLEQEL. The DOG1 domain maps to 115–331; the sequence is ALTFDLEYTR…RALSSLWLAR (217 aa).

This sequence belongs to the bZIP family. In terms of assembly, interacts with NPR1/NH1 and NPR3/NH3.

It localises to the nucleus. Functionally, plays a negative role in rice basal defense responses to the bacterial blight pathogen Xanthomomas oryzae pv. oryzae (Xoo). May function in both positive and negative regulation of rice defense genes. Binds DNA in vitro. Acts as a transcriptional activator when bound to NPR1/NH1 in vitro. Binds to the promoter sequence of CRK10 in vitro. This is Transcription factor TGA2.1 from Oryza sativa subsp. japonica (Rice).